Reading from the N-terminus, the 471-residue chain is 3-isopropylmalate dehydratase large subunit (471 aa).

[4Fe-4S] cluster contacts are provided by C346, C406, and C409.

Belongs to the aconitase/IPM isomerase family. LeuC type 1 subfamily. In terms of assembly, heterodimer of LeuC and LeuD. [4Fe-4S] cluster is required as a cofactor.

It catalyses the reaction (2R,3S)-3-isopropylmalate = (2S)-2-isopropylmalate. It functions in the pathway amino-acid biosynthesis; L-leucine biosynthesis; L-leucine from 3-methyl-2-oxobutanoate: step 2/4. Its function is as follows. Catalyzes the isomerization between 2-isopropylmalate and 3-isopropylmalate, via the formation of 2-isopropylmaleate. This is 3-isopropylmalate dehydratase large subunit from Bacillus pumilus (strain SAFR-032).